Reading from the N-terminus, the 102-residue chain is Glutaredoxin 1 (102 aa).

In terms of domain architecture, Glutaredoxin spans M1–T96. A disulfide bond links C17 and C20.

The protein belongs to the glutaredoxin family. Monomer.

The protein resides in the cytoplasm. In terms of biological role, has a glutathione-disulfide oxidoreductase activity in the presence of NADPH and glutathione reductase. Reduces low molecular weight disulfides and proteins. The protein is Glutaredoxin 1 (grxC1) of Rickettsia conorii (strain ATCC VR-613 / Malish 7).